A 2890-amino-acid polypeptide reads, in one-letter code: Bifunctional DNA-directed RNA polymerase subunit beta-beta' (2890 aa).

Positions 1–1377 (MSKKIPLKNR…DINIFGDEMD (1377 aa)) are DNA-directed RNA polymerase subunit beta. The DNA-directed RNA polymerase subunit beta' stretch occupies residues 1384-2890 (PIVIKEDDRP…LRTIEDSPKI (1507 aa)). Residues Cys1449, Cys1451, Cys1465, and Cys1468 each coordinate Zn(2+). Mg(2+) is bound by residues Asp1849, Asp1851, and Asp1853. The Zn(2+) site is built by Cys2179, Cys2253, Cys2260, and Cys2263.

The protein in the N-terminal section; belongs to the RNA polymerase beta chain family. It in the C-terminal section; belongs to the RNA polymerase beta' chain family. In terms of assembly, the RNAP catalytic core consists of 2 alpha, 1 beta/beta' and 1 omega subunit. When a sigma factor is associated with the core the holoenzyme is formed, which can initiate transcription. It depends on Mg(2+) as a cofactor. Zn(2+) is required as a cofactor.

It catalyses the reaction RNA(n) + a ribonucleoside 5'-triphosphate = RNA(n+1) + diphosphate. Functionally, DNA-dependent RNA polymerase catalyzes the transcription of DNA into RNA using the four ribonucleoside triphosphates as substrates. This Helicobacter acinonychis (strain Sheeba) protein is Bifunctional DNA-directed RNA polymerase subunit beta-beta' (rpoBC).